The chain runs to 582 residues: NAB transcription cofactor mab-10 (582 aa).

Over residues 1-70 the composition is skewed to low complexity; sequence MSSSSSSSLP…SSSSQRQSTS (70 aa). Disordered stretches follow at residues 1–84, 257–287, 333–365, and 516–582; these read MSSS…MPTP, SDQQ…PAGI, PPSS…SPFL, and SRKR…LPES. The NCD1 stretch occupies residues 83–161; the sequence is TPTTLSEWQL…EYSQDQTAFN (79 aa). Composition is skewed to low complexity over residues 257–276 and 333–345; these read SDQQ…STSS and PPSS…PSTS. The NCD2 stretch occupies residues 396–519; that stretch reads LSTAQISRLA…GYNYAKSRKR (124 aa). Over residues 573 to 582 the composition is skewed to basic and acidic residues; the sequence is EKMKGELPES.

The protein belongs to the NAB family. In terms of assembly, interacts with transcription factor lin-29 (via C-terminus).

Its subcellular location is the nucleus. Functionally, transcriptional cofactor. Heterochronic protein, involved in timing of a subset of differentiation events during the larval-to-adult transition. Promotes hypodermal terminal differentiation, together with transcription factor lin-29, perhaps as part of a transcriptional complex. Involved in regulating molting by repressing the expression of nuclear hormone receptors nhr-23 and nhr-25 in the adult hypoderm, probably acting in concert with lin-29. In Caenorhabditis elegans, this protein is NAB transcription cofactor mab-10.